We begin with the raw amino-acid sequence, 258 residues long: Imidazole glycerol phosphate synthase subunit HisF (258 aa).

Catalysis depends on residues D11 and D130.

The protein belongs to the HisA/HisF family. In terms of assembly, heterodimer of HisH and HisF.

It localises to the cytoplasm. It catalyses the reaction 5-[(5-phospho-1-deoxy-D-ribulos-1-ylimino)methylamino]-1-(5-phospho-beta-D-ribosyl)imidazole-4-carboxamide + L-glutamine = D-erythro-1-(imidazol-4-yl)glycerol 3-phosphate + 5-amino-1-(5-phospho-beta-D-ribosyl)imidazole-4-carboxamide + L-glutamate + H(+). It participates in amino-acid biosynthesis; L-histidine biosynthesis; L-histidine from 5-phospho-alpha-D-ribose 1-diphosphate: step 5/9. IGPS catalyzes the conversion of PRFAR and glutamine to IGP, AICAR and glutamate. The HisF subunit catalyzes the cyclization activity that produces IGP and AICAR from PRFAR using the ammonia provided by the HisH subunit. This is Imidazole glycerol phosphate synthase subunit HisF from Prochlorococcus marinus (strain MIT 9211).